The sequence spans 303 residues: Coenzyme PQQ synthesis protein B (303 aa).

It belongs to the PqqB family.

The protein operates within cofactor biosynthesis; pyrroloquinoline quinone biosynthesis. In terms of biological role, may be involved in the transport of PQQ or its precursor to the periplasm. This chain is Coenzyme PQQ synthesis protein B, found in Pseudomonas fluorescens (strain SBW25).